We begin with the raw amino-acid sequence, 591 residues long: Aspartate--tRNA ligase (591 aa).

Glu173 provides a ligand contact to L-aspartate. The segment at 197–200 (QLFK) is aspartate. Position 219 (Arg219) interacts with L-aspartate. Residues 219–221 (RDE) and Gln228 each bind ATP. His448 contributes to the L-aspartate binding site. Glu482 contributes to the ATP binding site. Arg489 is a binding site for L-aspartate. ATP is bound at residue 534-537 (GLDR).

Belongs to the class-II aminoacyl-tRNA synthetase family. Type 1 subfamily. In terms of assembly, homodimer.

It is found in the cytoplasm. The catalysed reaction is tRNA(Asp) + L-aspartate + ATP = L-aspartyl-tRNA(Asp) + AMP + diphosphate. Catalyzes the attachment of L-aspartate to tRNA(Asp) in a two-step reaction: L-aspartate is first activated by ATP to form Asp-AMP and then transferred to the acceptor end of tRNA(Asp). The protein is Aspartate--tRNA ligase of Shewanella sp. (strain ANA-3).